The sequence spans 173 residues: Siroheme decarboxylase alpha subunit (173 aa).

Substrate is bound by residues H115 and R119.

The protein belongs to the Ahb/Nir family. As to quaternary structure, forms a heterodimer composed of AhbA and AhbB.

It carries out the reaction siroheme + 2 H(+) = 12,18-didecarboxysiroheme + 2 CO2. The protein operates within porphyrin-containing compound metabolism; protoheme biosynthesis. Involved in siroheme-dependent heme b biosynthesis. Catalyzes the decarboxylation of siroheme into didecarboxysiroheme. Siroheme is decarboxylated to monodecarboxysiroheme, which is in turn decarboxylated to didecarboxysiroheme. In Desulfovibrio desulfuricans (strain ATCC 27774 / DSM 6949 / MB), this protein is Siroheme decarboxylase alpha subunit.